The chain runs to 730 residues: uncharacterized protein (730 aa).

Residues serine 82 and serine 89 each carry the phosphoserine modification. Disordered regions lie at residues 82–114 (SPVRRHNSIQPSNSGKNSTEKTSTKGSRTTGSY) and 447–468 (NTNHNFTTNNNNENESNDSKNE). Residues 89–98 (SIQPSNSGKN) show a composition bias toward polar residues. Residues 449 to 460 (NHNFTTNNNNEN) show a composition bias toward low complexity. Residues serine 483 and serine 651 each carry the phosphoserine modification.

This is an uncharacterized protein from Saccharomyces cerevisiae (strain ATCC 204508 / S288c) (Baker's yeast).